A 240-amino-acid chain; its full sequence is Uridylate kinase (240 aa).

12-15 contacts ATP; it reads KLSG. G54 contacts UMP. Residues G55 and R59 each coordinate ATP. UMP-binding positions include D74 and 135–142; that span reads TGNPFFTT. ATP-binding residues include T162, Y168, and D171.

The protein belongs to the UMP kinase family. As to quaternary structure, homohexamer.

It localises to the cytoplasm. It catalyses the reaction UMP + ATP = UDP + ADP. The protein operates within pyrimidine metabolism; CTP biosynthesis via de novo pathway; UDP from UMP (UMPK route): step 1/1. With respect to regulation, inhibited by UTP. In terms of biological role, catalyzes the reversible phosphorylation of UMP to UDP. This Xanthomonas campestris pv. campestris (strain ATCC 33913 / DSM 3586 / NCPPB 528 / LMG 568 / P 25) protein is Uridylate kinase.